The primary structure comprises 63 residues: Toxin Tx7335 (63 aa).

4 cysteine pairs are disulfide-bonded: Cys3–Cys24, Cys17–Cys39, Cys25–Cys55, and Cys56–Cys61.

Contains 4 disulfide bonds. As to expression, expressed by the venom gland.

The protein resides in the secreted. Functionally, activates bacterial pH-gated potassium channel KcsA by binding to its extracellular domain, probably at a site different from channel inhibitors. Increases both mean open time and open probability of KscA. This Dendroaspis angusticeps (Eastern green mamba) protein is Toxin Tx7335.